Here is a 338-residue protein sequence, read N- to C-terminus: Phenylalanine--tRNA ligase alpha subunit (338 aa).

Mg(2+) is bound at residue E252.

It belongs to the class-II aminoacyl-tRNA synthetase family. Phe-tRNA synthetase alpha subunit type 1 subfamily. As to quaternary structure, tetramer of two alpha and two beta subunits. It depends on Mg(2+) as a cofactor.

It is found in the cytoplasm. It carries out the reaction tRNA(Phe) + L-phenylalanine + ATP = L-phenylalanyl-tRNA(Phe) + AMP + diphosphate + H(+). The sequence is that of Phenylalanine--tRNA ligase alpha subunit from Ectopseudomonas mendocina (strain ymp) (Pseudomonas mendocina).